Reading from the N-terminus, the 213-residue chain is Protein-L-isoaspartate O-methyltransferase (213 aa).

Ser58 is an active-site residue.

It belongs to the methyltransferase superfamily. L-isoaspartyl/D-aspartyl protein methyltransferase family.

The protein localises to the cytoplasm. The enzyme catalyses [protein]-L-isoaspartate + S-adenosyl-L-methionine = [protein]-L-isoaspartate alpha-methyl ester + S-adenosyl-L-homocysteine. Functionally, catalyzes the methyl esterification of L-isoaspartyl residues in peptides and proteins that result from spontaneous decomposition of normal L-aspartyl and L-asparaginyl residues. It plays a role in the repair and/or degradation of damaged proteins. This is Protein-L-isoaspartate O-methyltransferase from Chlorobaculum tepidum (strain ATCC 49652 / DSM 12025 / NBRC 103806 / TLS) (Chlorobium tepidum).